A 189-amino-acid chain; its full sequence is Large ribosomal subunit protein uL5 (189 aa).

The protein belongs to the universal ribosomal protein uL5 family. As to quaternary structure, part of the 50S ribosomal subunit; part of the 5S rRNA/L5/L18/L25 subcomplex. Contacts the 5S rRNA and the P site tRNA. Forms a bridge to the 30S subunit in the 70S ribosome.

Functionally, this is one of the proteins that bind and probably mediate the attachment of the 5S RNA into the large ribosomal subunit, where it forms part of the central protuberance. In the 70S ribosome it contacts protein S13 of the 30S subunit (bridge B1b), connecting the 2 subunits; this bridge is implicated in subunit movement. Contacts the P site tRNA; the 5S rRNA and some of its associated proteins might help stabilize positioning of ribosome-bound tRNAs. In Corynebacterium jeikeium (strain K411), this protein is Large ribosomal subunit protein uL5.